Reading from the N-terminus, the 252-residue chain is 2-succinyl-6-hydroxy-2,4-cyclohexadiene-1-carboxylate synthase (252 aa).

The protein belongs to the AB hydrolase superfamily. MenH family. As to quaternary structure, monomer.

The catalysed reaction is 5-enolpyruvoyl-6-hydroxy-2-succinyl-cyclohex-3-ene-1-carboxylate = (1R,6R)-6-hydroxy-2-succinyl-cyclohexa-2,4-diene-1-carboxylate + pyruvate. The protein operates within quinol/quinone metabolism; 1,4-dihydroxy-2-naphthoate biosynthesis; 1,4-dihydroxy-2-naphthoate from chorismate: step 3/7. It participates in quinol/quinone metabolism; menaquinone biosynthesis. Functionally, catalyzes a proton abstraction reaction that results in 2,5-elimination of pyruvate from 2-succinyl-5-enolpyruvyl-6-hydroxy-3-cyclohexene-1-carboxylate (SEPHCHC) and the formation of 2-succinyl-6-hydroxy-2,4-cyclohexadiene-1-carboxylate (SHCHC). This chain is 2-succinyl-6-hydroxy-2,4-cyclohexadiene-1-carboxylate synthase, found in Escherichia coli (strain ATCC 8739 / DSM 1576 / NBRC 3972 / NCIMB 8545 / WDCM 00012 / Crooks).